We begin with the raw amino-acid sequence, 271 residues long: Insulin-like growth factor-binding protein 5 (271 aa).

An N-terminal signal peptide occupies residues 1 to 19 (MVLTAVLLLLAACAGPAQG). Positions 22 to 102 (SFVHCEPCDE…LHGRGVCLNE (81 aa)) constitute an IGFBP N-terminal domain. 6 disulfides stabilise this stretch: C26-C52, C29-C54, C37-C55, C44-C58, C66-C79, and C73-C99. Positions 109–121 (AKIERDSREHEEP) are enriched in basic and acidic residues. The tract at residues 109–129 (AKIERDSREHEEPTTSEMAEE) is disordered. S115 is modified (phosphoserine). The Thyroglobulin type-1 domain occupies 188–262 (QGPCRRHMEA…MEYVDGDFQC (75 aa)). Cystine bridges form between C191-C218, C229-C240, and C242-C262.

In terms of assembly, interacts with IGF1; this interaction enhances the growth stimulatory effects of IGF1 on fibroblasts. Interacts with CAV1; this interaction allows trafficking of IGFBP5 from the plasma membrane to the nucleus. Interacts with NCL; this interaction is necessary for IGFBP5 localization to the nucleus.

The protein resides in the secreted. The protein localises to the cytoplasm. It localises to the nucleus. In terms of biological role, multifunctional protein that plays a critical role in regulating the availability of IGFs to their receptors and thereby regulates IGF-mediated cellular processes including proliferation, differentiation, and apoptosis in a cell-type specific manner. Increases the cell proliferation of osteoblasts, intestinal smooth muscle cells and neuroblastoma cells. Enhances adhesion and survival of epithelial cells but decreases adhesion of mesenchymal cells. Once secreted, acts as a major mediator of mTORC1-dependent feedback inhibition of IGF1 signaling. Also plays a role in the induction of extracellular matrix (ECM) production and deposition independently of its nuclear translocation and binding to IGFs. Acts itself as a growth factor that can act independently of IGFs to regulate bone formation. Acts as a ligand for the ROR1 receptor which triggers formation of ROR1/HER2 heterodimer to enhance CREB oncogenic signaling. The polypeptide is Insulin-like growth factor-binding protein 5 (IGFBP5) (Sus scrofa (Pig)).